Consider the following 443-residue polypeptide: UDP-N-acetylmuramate--L-alanine ligase (443 aa).

Position 110-116 (110-116 (GAHGKTS)) interacts with ATP.

Belongs to the MurCDEF family.

It is found in the cytoplasm. It carries out the reaction UDP-N-acetyl-alpha-D-muramate + L-alanine + ATP = UDP-N-acetyl-alpha-D-muramoyl-L-alanine + ADP + phosphate + H(+). Its pathway is cell wall biogenesis; peptidoglycan biosynthesis. Functionally, cell wall formation. The sequence is that of UDP-N-acetylmuramate--L-alanine ligase from Lactococcus lactis subsp. lactis (strain IL1403) (Streptococcus lactis).